Consider the following 398-residue polypeptide: Digeranylgeranylglycerophospholipid reductase (398 aa).

Residues Ala-15, Glu-34, Cys-45, Ala-46, Gly-48, Arg-99, Ala-123, Asp-280, Gly-292, and Ile-293 each coordinate FAD. Val-372 provides a ligand contact to a 2,3-bis-O-(geranylgeranyl)-sn-glycerol 1-phospholipid.

This sequence belongs to the geranylgeranyl reductase family. DGGGPL reductase subfamily. It depends on FAD as a cofactor.

The enzyme catalyses a 2,3-bis-O-phytanyl-sn-glycerol 1-phospholipid + 8 oxidized 2[4Fe-4S]-[ferredoxin] = a 2,3-bis-O-(geranylgeranyl)-sn-glycerol 1-phospholipid + 8 reduced 2[4Fe-4S]-[ferredoxin] + 16 H(+). It catalyses the reaction 2,3-bis-O-(phytanyl)-sn-glycerol 1-phosphate + 8 oxidized 2[4Fe-4S]-[ferredoxin] = 2,3-bis-O-(geranylgeranyl)-sn-glycerol 1-phosphate + 8 reduced 2[4Fe-4S]-[ferredoxin] + 16 H(+). It carries out the reaction a 2,3-bis-O-phytanyl-sn-glycerol 1-phospholipid + 8 A = a 2,3-bis-O-(geranylgeranyl)-sn-glycerol 1-phospholipid + 8 AH2. The catalysed reaction is CDP-2,3-bis-O-(geranylgeranyl)-sn-glycerol + 8 AH2 = CDP-2,3-bis-O-(phytanyl)-sn-glycerol + 8 A. The enzyme catalyses archaetidylserine + 8 AH2 = 2,3-bis-O-phytanyl-sn-glycero-3-phospho-L-serine + 8 A. It participates in membrane lipid metabolism; glycerophospholipid metabolism. Functionally, is involved in the reduction of 2,3-digeranylgeranylglycerophospholipids (unsaturated archaeols) into 2,3-diphytanylglycerophospholipids (saturated archaeols) in the biosynthesis of archaeal membrane lipids. Catalyzes the formation of archaetidic acid (2,3-di-O-phytanyl-sn-glyceryl phosphate) from 2,3-di-O-geranylgeranylglyceryl phosphate (DGGGP) via the hydrogenation of each double bond of the isoprenoid chains. Is also probably able to reduce double bonds of geranyl groups in CDP-2,3-bis-O-(geranylgeranyl)-sn-glycerol and archaetidylserine, thus acting at various stages in the biosynthesis of archaeal membrane lipids. This chain is Digeranylgeranylglycerophospholipid reductase, found in Methanoculleus marisnigri (strain ATCC 35101 / DSM 1498 / JR1).